The chain runs to 443 residues: Xaa-Pro dipeptidase (443 aa).

Positions 244, 255, 336, 381, and 420 each coordinate Mn(2+).

The protein belongs to the peptidase M24B family. Bacterial-type prolidase subfamily. The cofactor is Mn(2+).

It catalyses the reaction Xaa-L-Pro dipeptide + H2O = an L-alpha-amino acid + L-proline. Functionally, splits dipeptides with a prolyl residue in the C-terminal position. This chain is Xaa-Pro dipeptidase, found in Stenotrophomonas maltophilia (strain K279a).